Here is a 461-residue protein sequence, read N- to C-terminus: MPMLKIYNSITRQKQEFKPINPGKIGMYVCGVTIYDLCHIGHGRTFVSFDMIVRYLRYVGYEVNFQRNITDVDDKIIKRANENNESCEALTERLIGEMHRDFDALNMLRPDFEPRATLHIAEIIDMVELLLARGHAYVASDGDVLFSVASYPDYGRLSGQNLDQLQAGARVEVDENKQNPMDFVLWKMSKPGEPTWESPWGPGRPGWHIECSAMNSKHLGLHFDIHGGGSDLQFPHHENEIAQSCCAHDTPYVNYWMHTGMVMVDREKMSKSLGNFFTIRDVLGHYDAETVRYFLLSGHYRSQLNYSEDNLKQARSALERLYTAIKDVDLTVAAAPAEEFIVKFKAAMDDDFNTPEAYSVLFDMVRDINRLKATDIAKASALAVAMKQLADVLGLLGQDPDAFFKGEGSDDEVAEIEALIVERNRARSEKDWAAADVARNRLDILGVVLEDGPSGTTWRKK.

Cysteine 30 lines the Zn(2+) pocket. Residues 32 to 42 carry the 'HIGH' region motif; it reads VTIYDLCHIGH. Zn(2+) is bound by residues cysteine 211, histidine 236, and glutamate 240. The 'KMSKS' region signature appears at 268-272; sequence KMSKS. Lysine 271 contributes to the ATP binding site.

This sequence belongs to the class-I aminoacyl-tRNA synthetase family. In terms of assembly, monomer. Requires Zn(2+) as cofactor.

Its subcellular location is the cytoplasm. It carries out the reaction tRNA(Cys) + L-cysteine + ATP = L-cysteinyl-tRNA(Cys) + AMP + diphosphate. The sequence is that of Cysteine--tRNA ligase from Shewanella putrefaciens (strain CN-32 / ATCC BAA-453).